The primary structure comprises 149 residues: Large ribosomal subunit protein bL9 (149 aa).

It belongs to the bacterial ribosomal protein bL9 family.

Binds to the 23S rRNA. The protein is Large ribosomal subunit protein bL9 of Dichelobacter nodosus (strain VCS1703A).